A 99-amino-acid polypeptide reads, in one-letter code: Ubiquitin-related modifier 1 (99 aa).

G99 bears the 1-thioglycine mark. G99 is covalently cross-linked (Glycyl lysine isopeptide (Gly-Lys) (interchain with K-? in acceptor proteins)).

This sequence belongs to the URM1 family. Homodimer; homodimerization may provide an autoprotection to the highly active C-terminal residue before attacking its substrates. Interacts with NCS2 and NCS6. Forms a conjugate with the target protein AHP1. C-terminal thiocarboxylation occurs in 2 steps, it is first acyl-adenylated (-COAMP) via the hesA/moeB/thiF part of UBA4, then thiocarboxylated (-COSH) via the rhodanese domain of UBA4.

It is found in the cytoplasm. Its subcellular location is the nucleus. Its pathway is tRNA modification; 5-methoxycarbonylmethyl-2-thiouridine-tRNA biosynthesis. Acts as a sulfur carrier required for 2-thiolation of mcm(5)S(2)U at tRNA wobble positions of cytosolic tRNA(Lys), tRNA(Glu) and tRNA(Gln). Serves as sulfur donor in tRNA 2-thiolation reaction by being thiocarboxylated (-COSH) at its C-terminus by the MOCS3 homolog UBA4. The sulfur is then transferred to tRNA to form 2-thiolation of mcm(5)S(2)U. Prior mcm(5) tRNA modification by the elongator complex is required for 2-thiolation. Also acts as a ubiquitin-like protein (UBL) that is covalently conjugated via an isopeptide bond to lysine residues of target proteins such as AHP1. The thiocarboxylated form serves as substrate for conjugation and oxidative stress specifically induces the formation of UBL-protein conjugates. The sequence is that of Ubiquitin-related modifier 1 from Saccharomyces cerevisiae (strain RM11-1a) (Baker's yeast).